Reading from the N-terminus, the 300-residue chain is Tyrosine recombinase XerD (300 aa).

A Core-binding (CB) domain is found at 6–89 (LFHKRLIEQF…ALKVFFHFLK (84 aa)). Positions 108-293 (RLPSILSTEE…ASESLIEKFH (186 aa)) constitute a Tyr recombinase domain. Active-site residues include Arg-152, Lys-174, His-245, Arg-248, and His-271. The O-(3'-phospho-DNA)-tyrosine intermediate role is filled by Tyr-280.

The protein belongs to the 'phage' integrase family. XerD subfamily. In terms of assembly, forms a cyclic heterotetrameric complex composed of two molecules of XerC and two molecules of XerD.

It localises to the cytoplasm. Functionally, site-specific tyrosine recombinase, which acts by catalyzing the cutting and rejoining of the recombining DNA molecules. The XerC-XerD complex is essential to convert dimers of the bacterial chromosome into monomers to permit their segregation at cell division. It also contributes to the segregational stability of plasmids. The chain is Tyrosine recombinase XerD from Chlamydia trachomatis serovar D (strain ATCC VR-885 / DSM 19411 / UW-3/Cx).